The sequence spans 236 residues: Flagellar L-ring protein (236 aa).

Positions 1 to 16 (MRMQLTAVLAASLLAG) are cleaved as a signal peptide. The N-palmitoyl cysteine moiety is linked to residue C17. The S-diacylglycerol cysteine moiety is linked to residue C17.

The protein belongs to the FlgH family. As to quaternary structure, the basal body constitutes a major portion of the flagellar organelle and consists of four rings (L,P,S, and M) mounted on a central rod.

Its subcellular location is the cell outer membrane. It localises to the bacterial flagellum basal body. Its function is as follows. Assembles around the rod to form the L-ring and probably protects the motor/basal body from shearing forces during rotation. The chain is Flagellar L-ring protein from Sinorhizobium fredii (strain NBRC 101917 / NGR234).